The sequence spans 87 residues: CRISPR-associated endoribonuclease Cas2 (87 aa).

Residue Asp8 participates in Mg(2+) binding.

This sequence belongs to the CRISPR-associated endoribonuclease Cas2 protein family. Homodimer, forms a heterotetramer with a Cas1 homodimer. The cofactor is Mg(2+).

Functionally, CRISPR (clustered regularly interspaced short palindromic repeat), is an adaptive immune system that provides protection against mobile genetic elements (viruses, transposable elements and conjugative plasmids). CRISPR clusters contain sequences complementary to antecedent mobile elements and target invading nucleic acids. CRISPR clusters are transcribed and processed into CRISPR RNA (crRNA). Functions as a ssRNA-specific endoribonuclease. Involved in the integration of spacer DNA into the CRISPR cassette. The chain is CRISPR-associated endoribonuclease Cas2 from Dictyoglomus turgidum (strain DSM 6724 / Z-1310).